The chain runs to 286 residues: Polyamine aminopropyltransferase (286 aa).

One can recognise a PABS domain in the interval 5–238 (TMWHETLHDQ…GIMTFAWATD (234 aa)). Q33 contacts S-methyl-5'-thioadenosine. The spermidine site is built by H64 and D88. S-methyl-5'-thioadenosine-binding positions include E108 and 140–141 (DG). Catalysis depends on D158, which acts as the Proton acceptor. 158–161 (DCTD) contributes to the spermidine binding site. P165 serves as a coordination point for S-methyl-5'-thioadenosine.

Belongs to the spermidine/spermine synthase family. Homodimer or homotetramer.

Its subcellular location is the cytoplasm. The enzyme catalyses S-adenosyl 3-(methylsulfanyl)propylamine + putrescine = S-methyl-5'-thioadenosine + spermidine + H(+). It functions in the pathway amine and polyamine biosynthesis; spermidine biosynthesis; spermidine from putrescine: step 1/1. Its function is as follows. Catalyzes the irreversible transfer of a propylamine group from the amino donor S-adenosylmethioninamine (decarboxy-AdoMet) to putrescine (1,4-diaminobutane) to yield spermidine. The protein is Polyamine aminopropyltransferase of Salmonella typhi.